Here is a 183-residue protein sequence, read N- to C-terminus: uncharacterized protein (183 aa).

Belongs to the EUO family.

This is an uncharacterized protein from Chlamydia trachomatis serovar D (strain ATCC VR-885 / DSM 19411 / UW-3/Cx).